Reading from the N-terminus, the 232-residue chain is Large ribosomal subunit protein uL1 (232 aa).

This sequence belongs to the universal ribosomal protein uL1 family. In terms of assembly, part of the 50S ribosomal subunit.

In terms of biological role, binds directly to 23S rRNA. The L1 stalk is quite mobile in the ribosome, and is involved in E site tRNA release. Its function is as follows. Protein L1 is also a translational repressor protein, it controls the translation of the L11 operon by binding to its mRNA. The chain is Large ribosomal subunit protein uL1 from Porphyromonas gingivalis (strain ATCC 33277 / DSM 20709 / CIP 103683 / JCM 12257 / NCTC 11834 / 2561).